We begin with the raw amino-acid sequence, 131 residues long: Profilin-7 (131 aa).

Cys-13 and Cys-115 are joined by a disulfide. The Involved in PIP2 interaction signature appears at Ala-81–Thr-97. Thr-111 carries the phosphothreonine modification.

Belongs to the profilin family. In terms of assembly, occurs in many kinds of cells as a complex with monomeric actin in a 1:1 ratio. In terms of processing, phosphorylated by MAP kinases.

The protein resides in the cytoplasm. It is found in the cytoskeleton. Functionally, binds to actin and affects the structure of the cytoskeleton. At high concentrations, profilin prevents the polymerization of actin, whereas it enhances it at low concentrations. In Olea europaea (Common olive), this protein is Profilin-7.